A 375-amino-acid chain; its full sequence is Alcohol dehydrogenase 1 (375 aa).

Ser-2 bears the N-acetylserine mark. Zn(2+)-binding residues include Cys-47, His-68, Cys-98, Cys-101, Cys-104, Cys-112, and Cys-175. Residues 200-205 (WSGRVG), Asp-224, and Lys-229 each bind NAD(+). Lys-234 is modified (N6-succinyllysine). 293–295 (VGV) lines the NAD(+) pocket. The residue at position 340 (Lys-340) is an N6-succinyllysine. Residue Arg-370 participates in NAD(+) binding.

The protein belongs to the zinc-containing alcohol dehydrogenase family. Class-I subfamily. Homodimer. Zn(2+) is required as a cofactor.

It localises to the cytoplasm. The catalysed reaction is a primary alcohol + NAD(+) = an aldehyde + NADH + H(+). It catalyses the reaction a secondary alcohol + NAD(+) = a ketone + NADH + H(+). The chain is Alcohol dehydrogenase 1 (ADH1) from Geomys attwateri (Attwater's pocket gopher).